A 283-amino-acid polypeptide reads, in one-letter code: GDP-polyphosphate phosphotransferase (283 aa).

Belongs to the polyphosphate kinase 2 (PPK2) family. Class I subfamily.

It carries out the reaction [phosphate](n) + GTP = [phosphate](n+1) + GDP. In terms of biological role, uses inorganic polyphosphate (polyP) as a donor to convert GDP to GTP. The sequence is that of GDP-polyphosphate phosphotransferase from Mycolicibacterium smegmatis (strain ATCC 700084 / mc(2)155) (Mycobacterium smegmatis).